The following is a 377-amino-acid chain: Putative glutamate--cysteine ligase 2 (377 aa).

This sequence belongs to the glutamate--cysteine ligase type 2 family. YbdK subfamily.

It catalyses the reaction L-cysteine + L-glutamate + ATP = gamma-L-glutamyl-L-cysteine + ADP + phosphate + H(+). Its function is as follows. ATP-dependent carboxylate-amine ligase which exhibits weak glutamate--cysteine ligase activity. The polypeptide is Putative glutamate--cysteine ligase 2 (Pseudomonas aeruginosa (strain LESB58)).